A 384-amino-acid polypeptide reads, in one-letter code: MQFKPAVTALVSAVALATLLSGCKKEEAAPAAQAPQVGVVTIQPQAFTLTSELPGRTSAYRVAEVRPQVNGIILKRLFKEGSEVKEGQQLYQIDPAVYEATLANAKANLLATRSLAERYKQLIDEQAVSKQEYDDANAKRLQAEASLKSAQIDLRYTKVLAPISGRIGRSSFTEGALVSNGQTDAMATIQQLDPIYVDVTQSTAELLKLRRDLESGQLQKAGDNAASVQLVLEDGSLFKQEGRLEFSEVAVDETTGSVTLRALFPNPDHTLLPGMFVHARLKAGVNANAILAPQQGVTRDLKGAPTALVVNQENKVELRQLKASRTLGSDWLIEEGLNPGDRLITEGLQYVRPGVEVKVSDATNVKKPAGPDQANAAKADAKAE.

A signal peptide spans 1-22 (MQFKPAVTALVSAVALATLLSG). The N-palmitoyl cysteine moiety is linked to residue cysteine 23. Residue cysteine 23 is the site of S-diacylglycerol cysteine attachment. The stretch at 115 to 155 (LAERYKQLIDEQAVSKQEYDDANAKRLQAEASLKSAQIDLR) forms a coiled coil. The disordered stretch occupies residues 362–384 (ATNVKKPAGPDQANAAKADAKAE). The segment covering 368–378 (PAGPDQANAAK) has biased composition (low complexity).

The protein belongs to the membrane fusion protein (MFP) (TC 8.A.1) family.

It is found in the cell inner membrane. The periplasmic linker protein component of an organic solvent and antibiotic efflux pump; confers resistance to toluene, hexane, p-xylene, ampicillin, penicillin G, erythromycin, novobiocin and tetracycline. The protein is Multidrug/solvent efflux pump periplasmic linker protein MepA (mepA) of Pseudomonas putida (Arthrobacter siderocapsulatus).